Consider the following 180-residue polypeptide: Required for excision 1-B domain-containing protein (180 aa).

Residues 1-23 (MITAEAASESTVPAVPGDTAATG) are disordered.

This Bos taurus (Bovine) protein is Required for excision 1-B domain-containing protein.